A 182-amino-acid polypeptide reads, in one-letter code: Large ribosomal subunit protein uL16 (182 aa).

Belongs to the universal ribosomal protein uL16 family.

This chain is Large ribosomal subunit protein uL16, found in Thermococcus onnurineus (strain NA1).